The sequence spans 69 residues: Metallothionein-like protein 3 (69 aa).

The protein belongs to the metallothionein superfamily. Type 15 family. Expressed in leaf mesophyll cells, root tips, and at low levels in anthers.

Its function is as follows. Metallothioneins have a high content of cysteine residues that bind various heavy metals. Functions as a metal chelator of copper (Cu) and zinc (Zn). Plays a role in Cu homeostasis, specifically in the remobilization of Cu from senescing leaves. The mobilization of Cu from internal sources is important for seed development. The chain is Metallothionein-like protein 3 from Arabidopsis thaliana (Mouse-ear cress).